The following is a 110-amino-acid chain: Auxin-responsive protein SAUR71 (110 aa).

Belongs to the ARG7 family. Highly expressed in the steles of roots and hypocotyls.

It is found in the cytoplasm. Plays a role in the regulation of cell expansion, root meristem patterning and auxin transport. This Arabidopsis thaliana (Mouse-ear cress) protein is Auxin-responsive protein SAUR71.